Reading from the N-terminus, the 1305-residue chain is MSLLQSALDFLAGPGSLGGAAGRDQSDFVGQTVELGELRLRVRRVLAEGGFAFVYEAQDLGSGREYALKRLLSNEEEKNRAIIQEVCFLKKLSGHPNIVQFCSAASIGKEESDTGQAEFLLLTELCKGQLVEFLKRVECKGPLSCDSILKIFYQTCRAVQHMHRQKPPIIHRDLKVENLLLSNQGTIKLCDFGSATTISHYPDYSWSAQKRAMVEEEITRNTTPMYRTPEIVDLYSNFPIGEKQDIWALGCILYLLCFRQHPFEDGAKLRIVNGKYSIPVNDTRYTVFHDLIRAMLKVNPVERLSIAEVVRQLQEIAAARNVNPKAPITELLEQNGGYGNSGPSRAQPPCGGTVNSSGVLALAEYDQPYGGFLDILRGGTERLFTNLKDTSSKVIQSVANYAKGDLDISYITSRIAVMSFPAEGVESAIKNNIEDVRMFLDAKHPGHYAVYNLSPRIYRASKFHNRVTECGWAVRRAPHLHSLYTLCRSMHAWLREDHRNVCVVHCMDGRAASAVAVCAFLCFCRLFSTAEAAVYMFSMKRCPPGIWPSHKRYIEYVCDMVAEEPITPHSKPMLVKSVVMTPVPLFSKQRNGCRPFCEVYVGEERVTTTSQEYDRMKEFKIEDGKAVIPLGVTVQGDVLIIIYHARATLGGRLQAKMASMKMFQIQFHTGFVPRNATTVKFAKYDLDACDIQEKYPDLFQVNLEVEVEPRDRPSREAPPWENTSLRGLNPKILFSNREEQQDILSKFGKPELPRQPGSTAQYDAEAGSPEAEITESDSPQSSSTDTNHFLHTLDWQEEKEPETGLDNTSPKESQSVLIADGDGSEVSDEEEASFPSEERKPGAGEDTPRLAAGTKQQDLIFDVGMLAAPQEPVQPEEGVDLLGLHSEGDLRPAAPLQACGVPSSNTDLLSCLLEPSDAAQVGPPGDLLGGEAPLLLASPVSPLGLQNNLQGKVPDTVDPFDQFLLSSNSDTQPCSKPDLFGEFLNSDSVASSTAFPSTHSAPPPSCSTAFLHLGDLPAEPSKVIASSSHPDLLGGWDTWADTATPGPASIPVPEGTLFSSAGHPAPPGPNPSQTKSQNLDPFADLSDLSSSLQGLPAGLPAGGFVGAPAPTQKSNSPWQANRPTAPGTSWTPQAKPAPRASEQLRSHFSVIGAREERGVRVPSFAQKPKVSENDFEDLLPNQGFSKSDKKGPKTMAEMRKQELARDTDPLKLKLLDWIEGKERNIRALLSTLHTVLWDGESRWTPVSMADLVTPEQVKKQYRRAVLVVHPDKATGQPYEQYAKMIFMELNDAWSEFENQGSRPLF.

An N-acetylserine modification is found at serine 2. Residues serine 2 and serine 16 each carry the phosphoserine modification. Residues 40–317 form the Protein kinase domain; that stretch reads LRVRRVLAEG…EVVRQLQEIA (278 aa). ATP is bound by residues 46–54 and lysine 69; that span reads LAEGGFAFV. Catalysis depends on aspartate 173, which acts as the Proton acceptor. The Phosphatase tensin-type domain occupies 397 to 564; that stretch reads SVANYAKGDL…EYVCDMVAEE (168 aa). Serine 454 is modified (phosphoserine). In terms of domain architecture, C2 tensin-type spans 570–708; the sequence is SKPMLVKSVV…FQVNLEVEVE (139 aa). Disordered stretches follow at residues 707-732 and 747-854; these read VEPR…NPKI and FGKP…AAGT. Residue serine 768 is modified to Phosphoserine. Residue threonine 774 is modified to Phosphothreonine. Residues 776 to 789 show a composition bias toward polar residues; that stretch reads SDSPQSSSTDTNHF. Serine 781 carries the phosphoserine modification. Threonine 792 is modified (phosphothreonine). The segment covering 805–816 has biased composition (polar residues); that stretch reads LDNTSPKESQSV. Phosphoserine occurs at positions 809, 824, and 827. Acidic residues predominate over residues 822 to 832; sequence DGSEVSDEEEA. Basic and acidic residues predominate over residues 836–848; it reads SEERKPGAGEDTP. At serine 938 the chain carries Phosphoserine. The tract at residues 1037–1139 is disordered; that stretch reads DTWADTATPG…WTPQAKPAPR (103 aa). The segment covering 1084-1099 has biased composition (low complexity); the sequence is DLSDLSSSLQGLPAGL. A compositionally biased stretch (polar residues) spans 1111–1132; it reads TQKSNSPWQANRPTAPGTSWTP. Arginine 1122 carries the omega-N-methylarginine modification. Serine 1171 carries the post-translational modification Phosphoserine. A J domain is found at 1241-1305; the sequence is SRWTPVSMAD…FENQGSRPLF (65 aa).

The protein belongs to the protein kinase superfamily. Ser/Thr protein kinase family.

It is found in the cytoplasm. Its subcellular location is the perinuclear region. The protein resides in the golgi apparatus. It localises to the trans-Golgi network. The protein localises to the cell junction. It is found in the focal adhesion. Its subcellular location is the cytoplasmic vesicle. The protein resides in the clathrin-coated vesicle. It catalyses the reaction L-seryl-[protein] + ATP = O-phospho-L-seryl-[protein] + ADP + H(+). The catalysed reaction is L-threonyl-[protein] + ATP = O-phospho-L-threonyl-[protein] + ADP + H(+). Its function is as follows. Associates with cyclin G and CDK5. Seems to act as an auxilin homolog that is involved in the uncoating of clathrin-coated vesicles by Hsc70 in non-neuronal cells. Expression oscillates slightly during the cell cycle, peaking at G1. May play a role in clathrin-mediated endocytosis and intracellular trafficking, and in the dynamics of clathrin assembly/disassembly. The sequence is that of Cyclin-G-associated kinase from Mus musculus (Mouse).